An 82-amino-acid chain; its full sequence is DNA-directed RNA polymerase subunit Rpo5 (82 aa).

This sequence belongs to the archaeal Rpo5/eukaryotic RPB5 RNA polymerase subunit family. Part of the RNA polymerase complex.

Its subcellular location is the cytoplasm. The catalysed reaction is RNA(n) + a ribonucleoside 5'-triphosphate = RNA(n+1) + diphosphate. DNA-dependent RNA polymerase (RNAP) catalyzes the transcription of DNA into RNA using the four ribonucleoside triphosphates as substrates. The sequence is that of DNA-directed RNA polymerase subunit Rpo5 from Thermococcus celer.